Reading from the N-terminus, the 149-residue chain is Large ribosomal subunit protein bL9 (149 aa).

The protein belongs to the bacterial ribosomal protein bL9 family.

Binds to the 23S rRNA. The chain is Large ribosomal subunit protein bL9 from Citrobacter koseri (strain ATCC BAA-895 / CDC 4225-83 / SGSC4696).